A 111-amino-acid polypeptide reads, in one-letter code: Ribulose bisphosphate carboxylase small subunit (111 aa).

The protein belongs to the RuBisCO small chain family. As to quaternary structure, heterohexadecamer of 8 large and 8 small subunits. The CcmM short form purifies from carboxysomes in complex with both RuBisCO subunits; a second complex with full-length CcmM and RuBisCO also includes carbonic anhydrase (CA, ccaA). RuBisCO-CcmM complexes are probably associated with the carboxysome shell. Isolated reduced and oxidized SSUL1 binds holo-RuBisCO (RbcL(8)-RbcS(8)) but not either subunit octamer alone; RuBisCO has a higher affinity for reduced SSUL1.

Its subcellular location is the carboxysome. RuBisCO catalyzes two reactions: the carboxylation of D-ribulose 1,5-bisphosphate, the primary event in carbon dioxide fixation, as well as the oxidative fragmentation of the pentose substrate in the photorespiration process. Both reactions occur simultaneously and in competition at the same active site. Its function is as follows. Beta-carboxysome assembly initiates when soluble RuBisCO aggregates is condensed into a liquid matrix in a pre-carboxysome by the RbcS-like domains of probably both CcmM58 and CcmM35. CcmN interacts with the N-terminus of CcmM58, and then recruits the CcmK2 major shell protein via CcmN's encapsulation peptide. Shell formation requires CcmK proteins and CcmO. CcmL caps the otherwise elongated carboxysome. Once fully encapsulated carboxysomes are formed, they migrate within the cell probably via interactions with the cytoskeleton. The protein is Ribulose bisphosphate carboxylase small subunit of Synechococcus elongatus (strain ATCC 33912 / PCC 7942 / FACHB-805) (Anacystis nidulans R2).